The primary structure comprises 435 residues: S-phase entry cyclin-5 (435 aa).

Disordered regions lie at residues 36-70 and 104-126; these read KRALSKNDSSSKQQVQDSKPRRALTDVPVNNNPLS and NDRTAAEQEEEEEEEGEDDDAAS. Positions 41 to 52 are enriched in low complexity; that stretch reads KNDSSSKQQVQD. Acidic residues predominate over residues 110–124; it reads EQEEEEEEEGEDDDA.

This sequence belongs to the cyclin family. Cyclin AB subfamily.

Functionally, required for efficient progression through S phase and possibly for the normal progression through meiosis. Interacts with CDC28. This is S-phase entry cyclin-5 (CLB5) from Saccharomyces cerevisiae (strain ATCC 204508 / S288c) (Baker's yeast).